Here is a 488-residue protein sequence, read N- to C-terminus: 3-octaprenyl-4-hydroxybenzoate carboxy-lyase (488 aa).

Position 172 (Asn-172) interacts with Mn(2+). Prenylated FMN is bound by residues 175 to 177, 189 to 191, and 194 to 195; these read IYR, RWL, and RG. Glu-238 lines the Mn(2+) pocket. Catalysis depends on Asp-287, which acts as the Proton donor.

This sequence belongs to the UbiD family. As to quaternary structure, homohexamer. The cofactor is prenylated FMN. Mn(2+) serves as cofactor.

It localises to the cell membrane. The enzyme catalyses a 4-hydroxy-3-(all-trans-polyprenyl)benzoate + H(+) = a 2-(all-trans-polyprenyl)phenol + CO2. The protein operates within cofactor biosynthesis; ubiquinone biosynthesis. Functionally, catalyzes the decarboxylation of 3-octaprenyl-4-hydroxy benzoate to 2-octaprenylphenol, an intermediate step in ubiquinone biosynthesis. In Azotobacter vinelandii (strain DJ / ATCC BAA-1303), this protein is 3-octaprenyl-4-hydroxybenzoate carboxy-lyase.